The primary structure comprises 439 residues: MRFQLFYILGLLSVTSLTHAASNLICYYDSNSYLRQGLAKMHTNELDLALQFCTHLVYGYAGLKSGTLELFSLNVDLDMFYYKDITALRQKFPQLKILLSVGGDRDVDEAHPNKYVELLEANRTAQQNFIDSSMILLKRNGFDGLDLAFQLPRNKPRKVHGSLGSYWKSFKKLFTGDFVVDPQAEEHKSQFTDLVGNIKNAFRSANLMLSLTVLPNVNSTWYFDVPKLHPQFDYINLAAFDFLTPLRNPEEADFTAPIFFQDEQNRLPHLNVEFQINYWLQNHCPGQKLNLGIASYGRAWKLSKGSGLSGAPIVHETCGVAPGGIQIQSAEGLLSWPEICSKLSQNASAQYRGELAPLRKVTDLTQKYGNYALRPADDNGDFGVWLSFDDPDFAGIKAVYAKGKGLGGIALFDLSYDDFRGLCTGQKYPILRSIKYFMG.

A signal peptide spans 1–20; that stretch reads MRFQLFYILGLLSVTSLTHA. In terms of domain architecture, GH18 spans 22–439; the sequence is SNLICYYDSN…ILRSIKYFMG (418 aa). Cysteine 26 and cysteine 53 are oxidised to a cystine. Residues asparagine 122, asparagine 218, and asparagine 346 are each glycosylated (N-linked (GlcNAc...) asparagine). The cysteines at positions 340 and 423 are disulfide-linked.

Belongs to the glycosyl hydrolase 18 family. IDGF subfamily. Primarily expressed in yolk cells and fat body. In larvae, it is expressed in large salivary gland cells and weakly expressed in imaginal disks. Less expressed than Idgf2 and Idgf4.

The protein resides in the secreted. Cooperates with insulin-like peptides to stimulate the proliferation, polarization and motility of imaginal disk cells. May act by stabilizing the binding of insulin-like peptides to its receptor through a simultaneous interaction with both molecules to form a multiprotein signaling complex. The protein is Chitinase-like protein Idgf1 (Idgf1) of Drosophila melanogaster (Fruit fly).